The primary structure comprises 237 residues: Pyridoxine 5'-phosphate synthase (237 aa).

Asn-7 and Arg-18 together coordinate 3-amino-2-oxopropyl phosphate. Residue His-43 is the Proton acceptor of the active site. 1-deoxy-D-xylulose 5-phosphate is bound by residues Arg-45 and His-50. Catalysis depends on Glu-70, which acts as the Proton acceptor. A 1-deoxy-D-xylulose 5-phosphate-binding site is contributed by Thr-100. His-190 (proton donor) is an active-site residue. Residues Asp-191 and 213-214 (GH) each bind 3-amino-2-oxopropyl phosphate.

It belongs to the PNP synthase family. As to quaternary structure, homooctamer; tetramer of dimers.

It localises to the cytoplasm. The enzyme catalyses 3-amino-2-oxopropyl phosphate + 1-deoxy-D-xylulose 5-phosphate = pyridoxine 5'-phosphate + phosphate + 2 H2O + H(+). Its pathway is cofactor biosynthesis; pyridoxine 5'-phosphate biosynthesis; pyridoxine 5'-phosphate from D-erythrose 4-phosphate: step 5/5. Catalyzes the complicated ring closure reaction between the two acyclic compounds 1-deoxy-D-xylulose-5-phosphate (DXP) and 3-amino-2-oxopropyl phosphate (1-amino-acetone-3-phosphate or AAP) to form pyridoxine 5'-phosphate (PNP) and inorganic phosphate. This is Pyridoxine 5'-phosphate synthase from Bacteroides thetaiotaomicron (strain ATCC 29148 / DSM 2079 / JCM 5827 / CCUG 10774 / NCTC 10582 / VPI-5482 / E50).